Here is a 187-residue protein sequence, read N- to C-terminus: Dihydrofolate reductase (187 aa).

The DHFR domain occupies 4–185 (PLNCIVAVSQ…IKYKFEVYEK (182 aa)). Residues alanine 10 and 16–22 (GIGKNGD) contribute to the NADP(+) site. 31–36 (EFKYFQ) is a substrate binding site. At lysine 33 the chain carries N6-acetyllysine; alternate. Position 33 is an N6-succinyllysine; alternate (lysine 33). Residue 55 to 57 (RKT) coordinates NADP(+). Arginine 71 serves as a coordination point for substrate. NADP(+)-binding positions include 77 to 79 (SRE) and 117 to 124 (GGSSVYQE).

The protein belongs to the dihydrofolate reductase family. In terms of assembly, homodimer.

The protein resides in the mitochondrion. The protein localises to the cytoplasm. It carries out the reaction (6S)-5,6,7,8-tetrahydrofolate + NADP(+) = 7,8-dihydrofolate + NADPH + H(+). It participates in cofactor biosynthesis; tetrahydrofolate biosynthesis; 5,6,7,8-tetrahydrofolate from 7,8-dihydrofolate: step 1/1. Functionally, key enzyme in folate metabolism. Contributes to the de novo mitochondrial thymidylate biosynthesis pathway. Catalyzes an essential reaction for de novo glycine and purine synthesis, and for DNA precursor synthesis. Binds its own mRNA. The protein is Dihydrofolate reductase (Dhfr) of Rattus norvegicus (Rat).